Reading from the N-terminus, the 242-residue chain is ATP synthase subunit a (242 aa).

The next 6 membrane-spanning stretches (helical) occupy residues 29-49 (SSIY…LAFY), 84-104 (FIPL…LGMT), 114-134 (IIVT…VGFV), 140-160 (FLTL…MIVI), 181-201 (MAGH…MIYL), and 203-223 (FLPI…AILQ).

The protein belongs to the ATPase A chain family. As to quaternary structure, F-type ATPases have 2 components, CF(1) - the catalytic core - and CF(0) - the membrane proton channel. CF(1) has five subunits: alpha(3), beta(3), gamma(1), delta(1), epsilon(1). CF(0) has three main subunits: a(1), b(2) and c(9-12). The alpha and beta chains form an alternating ring which encloses part of the gamma chain. CF(1) is attached to CF(0) by a central stalk formed by the gamma and epsilon chains, while a peripheral stalk is formed by the delta and b chains.

The protein localises to the cell inner membrane. Functionally, key component of the proton channel; it plays a direct role in the translocation of protons across the membrane. The protein is ATP synthase subunit a of Rickettsia rickettsii (strain Sheila Smith).